The primary structure comprises 296 residues: Thiamine-monophosphate kinase (296 aa).

Mg(2+) contacts are provided by D32, T46, and D48. Position 55 (D55) interacts with substrate. Residues D76 and D121 each coordinate Mg(2+). ATP contacts are provided by residues G120–D121 and R144. D206 serves as a coordination point for Mg(2+). Residue S208 coordinates ATP. D209 lines the Mg(2+) pocket. Y293 contributes to the substrate binding site.

It belongs to the thiamine-monophosphate kinase family.

It catalyses the reaction thiamine phosphate + ATP = thiamine diphosphate + ADP. The protein operates within cofactor biosynthesis; thiamine diphosphate biosynthesis; thiamine diphosphate from thiamine phosphate: step 1/1. Functionally, catalyzes the ATP-dependent phosphorylation of thiamine-monophosphate (TMP) to form thiamine-pyrophosphate (TPP), the active form of vitamin B1. This Archaeoglobus fulgidus (strain ATCC 49558 / DSM 4304 / JCM 9628 / NBRC 100126 / VC-16) protein is Thiamine-monophosphate kinase.